A 307-amino-acid polypeptide reads, in one-letter code: Taste receptor type 2 member 41 (307 aa).

Residues 1–7 (MQAALTA) are Extracellular-facing. Residues 8–28 (FFMLLFSLLSLLGIAANGFIV) form a helical membrane-spanning segment. Residues 29-40 (LVLGREWLRYGR) lie on the Cytoplasmic side of the membrane. The helical transmembrane segment at 41–61 (LLPLDMILISLGASRFCLQLV) threads the bilayer. At 62 to 88 (GTVHNFYYSAQKVEYSGGLGRQFFHLH) the chain is on the extracellular side. The chain crosses the membrane as a helical span at residues 89–109 (WHFLNSATFWFCSWLSVLFCV). Residues 110 to 129 (KIANITHPTFLWLKWRFPGW) are Cytoplasmic-facing. The chain crosses the membrane as a helical span at residues 130–150 (VPWLLLGSVLISFIITLLFFW). Topologically, residues 151–183 (VNYPAYQEFLIRKFSVNMTYKWNTRIETYYFPS) are extracellular. Asn167 is a glycosylation site (N-linked (GlcNAc...) asparagine). The helical transmembrane segment at 184-204 (LKLVIWSIPFSVFLVSIMLLI) threads the bilayer. Residues 205–234 (NSLRRHTQRMQHNGHSLQDPSTQAHTRALK) lie on the Cytoplasmic side of the membrane. The chain crosses the membrane as a helical span at residues 235–255 (SLISFLILYALSFLSLIIDAT). The Extracellular segment spans residues 256 to 264 (KFISMQNDF). The helical transmembrane segment at 265–285 (YWPWQIAVYLCISVHPFILIF) threads the bilayer. The Cytoplasmic segment spans residues 286–307 (SNLKLRSVFSQLLLLARGFWVA).

This sequence belongs to the G-protein coupled receptor T2R family.

It is found in the membrane. In terms of biological role, receptor that may play a role in the perception of bitterness and is gustducin-linked. May play a role in sensing the chemical composition of the gastrointestinal content. The activity of this receptor may stimulate alpha gustducin, mediate PLC-beta-2 activation and lead to the gating of TRPM5. This is Taste receptor type 2 member 41 (TAS2R41) from Pan troglodytes (Chimpanzee).